A 170-amino-acid polypeptide reads, in one-letter code: ATP synthase subunit b (170 aa).

Residues 15 to 37 (LNLFETNVLNWAVVVFGLYKFLP) traverse the membrane as a helical segment.

Belongs to the ATPase B chain family. F-type ATPases have 2 components, F(1) - the catalytic core - and F(0) - the membrane proton channel. F(1) has five subunits: alpha(3), beta(3), gamma(1), delta(1), epsilon(1). F(0) has four main subunits: a(1), b(1), b'(1) and c(10-14). The alpha and beta chains form an alternating ring which encloses part of the gamma chain. F(1) is attached to F(0) by a central stalk formed by the gamma and epsilon chains, while a peripheral stalk is formed by the delta, b and b' chains.

It localises to the cellular thylakoid membrane. Functionally, f(1)F(0) ATP synthase produces ATP from ADP in the presence of a proton or sodium gradient. F-type ATPases consist of two structural domains, F(1) containing the extramembraneous catalytic core and F(0) containing the membrane proton channel, linked together by a central stalk and a peripheral stalk. During catalysis, ATP synthesis in the catalytic domain of F(1) is coupled via a rotary mechanism of the central stalk subunits to proton translocation. In terms of biological role, component of the F(0) channel, it forms part of the peripheral stalk, linking F(1) to F(0). The protein is ATP synthase subunit b of Prochlorococcus marinus (strain MIT 9515).